The sequence spans 176 residues: Transcription termination/antitermination protein NusG (176 aa).

The 25-residue stretch at 125 to 149 folds into the KOW domain; sequence GEVVRVVEGPFANFTATVEEYDVEH.

The protein belongs to the NusG family.

Functionally, participates in transcription elongation, termination and antitermination. This is Transcription termination/antitermination protein NusG from Helicobacter pylori (strain J99 / ATCC 700824) (Campylobacter pylori J99).